The chain runs to 322 residues: MNTVGTPLLWGGFAVVVVIMLSIDLLLQGRRGAHAMSMKQAAGWSILWVTLSLLFNAAFWWYLAETQGREVADPQALAFLTGYLIEKSLAVDNVFVWLMLFSYFSVPPALQRRVLVYGVLGAIVLRTIMIFAGTWLITQFEWLLYVFGAFLLFTGVKMALAKEDESGIGEKPMVRWLRGHLRMTDTIENEHFFVRKNGLLYATPLLLVLIMVEFSDVIFAVDSIPAIFAVTTDPFIVLTSNLFAILGLRAMYFLLSGVAERFSMLKYGLAVILVFIGIKMLIVDFYHIPIAISLGVVFGILTITLVINTWVNHQRDKKLRAQ.

Over 1–6 the chain is Periplasmic; it reads MNTVGT. A helical transmembrane segment spans residues 7-27; that stretch reads PLLWGGFAVVVVIMLSIDLLL. The Cytoplasmic segment spans residues 28-43; that stretch reads QGRRGAHAMSMKQAAG. A helical membrane pass occupies residues 44-64; it reads WSILWVTLSLLFNAAFWWYLA. The Periplasmic portion of the chain corresponds to 65–89; that stretch reads ETQGREVADPQALAFLTGYLIEKSL. Residues 90–110 form a helical membrane-spanning segment; that stretch reads AVDNVFVWLMLFSYFSVPPAL. At 111 to 113 the chain is on the cytoplasmic side; it reads QRR. A helical transmembrane segment spans residues 114-134; it reads VLVYGVLGAIVLRTIMIFAGT. Position 135 (Trp-135) is a topological domain, periplasmic. A helical membrane pass occupies residues 136–156; the sequence is LITQFEWLLYVFGAFLLFTGV. Residues 157 to 198 are Cytoplasmic-facing; that stretch reads KMALAKEDESGIGEKPMVRWLRGHLRMTDTIENEHFFVRKNG. A helical membrane pass occupies residues 199-219; sequence LLYATPLLLVLIMVEFSDVIF. The Periplasmic segment spans residues 220 to 225; the sequence is AVDSIP. A helical transmembrane segment spans residues 226–246; the sequence is AIFAVTTDPFIVLTSNLFAIL. Residues 247 to 261 are Cytoplasmic-facing; the sequence is GLRAMYFLLSGVAER. Residues 262–282 form a helical membrane-spanning segment; that stretch reads FSMLKYGLAVILVFIGIKMLI. Residues 283–286 lie on the Periplasmic side of the membrane; the sequence is VDFY. The helical transmembrane segment at 287–307 threads the bilayer; the sequence is HIPIAISLGVVFGILTITLVI. Residues 308–321 lie on the Cytoplasmic side of the membrane; it reads NTWVNHQRDKKLRA.

Belongs to the TerC family.

It localises to the cell inner membrane. In terms of biological role, has been proposed to be a redox modulator. The sequence is that of Putative membrane-bound redox modulator Alx (alx) from Salmonella typhi.